Consider the following 111-residue polypeptide: Large ribosomal subunit protein uL22 (111 aa).

This sequence belongs to the universal ribosomal protein uL22 family. Part of the 50S ribosomal subunit.

In terms of biological role, this protein binds specifically to 23S rRNA; its binding is stimulated by other ribosomal proteins, e.g. L4, L17, and L20. It is important during the early stages of 50S assembly. It makes multiple contacts with different domains of the 23S rRNA in the assembled 50S subunit and ribosome. Its function is as follows. The globular domain of the protein is located near the polypeptide exit tunnel on the outside of the subunit, while an extended beta-hairpin is found that lines the wall of the exit tunnel in the center of the 70S ribosome. The sequence is that of Large ribosomal subunit protein uL22 from Chlamydia caviae (strain ATCC VR-813 / DSM 19441 / 03DC25 / GPIC) (Chlamydophila caviae).